Here is a 100-residue protein sequence, read N- to C-terminus: Urease subunit gamma (100 aa).

This sequence belongs to the urease gamma subunit family. Heterotrimer of UreA (gamma), UreB (beta) and UreC (alpha) subunits. Three heterotrimers associate to form the active enzyme.

Its subcellular location is the cytoplasm. The catalysed reaction is urea + 2 H2O + H(+) = hydrogencarbonate + 2 NH4(+). The protein operates within nitrogen metabolism; urea degradation; CO(2) and NH(3) from urea (urease route): step 1/1. This is Urease subunit gamma from Proteus hauseri.